A 197-amino-acid polypeptide reads, in one-letter code: Protein GrpE (197 aa).

The segment at 1-40 (MSSKEQKTPEGQAPEEIIMDRHEEIEAVEPEASAEQVDPR) is disordered.

It belongs to the GrpE family. In terms of assembly, homodimer.

It localises to the cytoplasm. Functionally, participates actively in the response to hyperosmotic and heat shock by preventing the aggregation of stress-denatured proteins, in association with DnaK and GrpE. It is the nucleotide exchange factor for DnaK and may function as a thermosensor. Unfolded proteins bind initially to DnaJ; upon interaction with the DnaJ-bound protein, DnaK hydrolyzes its bound ATP, resulting in the formation of a stable complex. GrpE releases ADP from DnaK; ATP binding to DnaK triggers the release of the substrate protein, thus completing the reaction cycle. Several rounds of ATP-dependent interactions between DnaJ, DnaK and GrpE are required for fully efficient folding. The protein is Protein GrpE of Shigella flexneri serotype 5b (strain 8401).